A 612-amino-acid polypeptide reads, in one-letter code: Probable translation initiation factor IF-2 (612 aa).

Positions 11-229 (LRQPIVVVLG…VLAGLTQRYL (219 aa)) constitute a tr-type G domain. The tract at residues 20–27 (GHVDHGKT) is G1. Position 20-27 (20-27 (GHVDHGKT)) interacts with GTP. Positions 45 to 49 (LITQH) are G2. The interval 84–87 (DTPG) is G3. GTP is bound by residues 84–88 (DTPGH) and 138–141 (NKID). Residues 138-141 (NKID) form a G4 region. The G5 stretch occupies residues 207–209 (SAK).

This sequence belongs to the TRAFAC class translation factor GTPase superfamily. Classic translation factor GTPase family. IF-2 subfamily.

Functionally, function in general translation initiation by promoting the binding of the formylmethionine-tRNA to ribosomes. Seems to function along with eIF-2. In Hyperthermus butylicus (strain DSM 5456 / JCM 9403 / PLM1-5), this protein is Probable translation initiation factor IF-2.